Reading from the N-terminus, the 252-residue chain is Trans-aconitate 2-methyltransferase (252 aa).

This sequence belongs to the methyltransferase superfamily. Tam family.

It localises to the cytoplasm. The catalysed reaction is trans-aconitate + S-adenosyl-L-methionine = (E)-3-(methoxycarbonyl)pent-2-enedioate + S-adenosyl-L-homocysteine. In terms of biological role, catalyzes the S-adenosylmethionine monomethyl esterification of trans-aconitate. The protein is Trans-aconitate 2-methyltransferase of Escherichia coli (strain ATCC 8739 / DSM 1576 / NBRC 3972 / NCIMB 8545 / WDCM 00012 / Crooks).